The sequence spans 76 residues: Translational regulator CsrA (76 aa).

It belongs to the CsrA/RsmA family. Homodimer; the beta-strands of each monomer intercalate to form a hydrophobic core, while the alpha-helices form wings that extend away from the core.

It is found in the cytoplasm. In terms of biological role, a translational regulator that binds mRNA to regulate translation initiation and/or mRNA stability. Usually binds in the 5'-UTR at or near the Shine-Dalgarno sequence preventing ribosome-binding, thus repressing translation. Its main target seems to be the major flagellin gene, while its function is anatagonized by FliW. The chain is Translational regulator CsrA from Syntrophomonas wolfei subsp. wolfei (strain DSM 2245B / Goettingen).